A 179-amino-acid chain; its full sequence is Inner membrane-spanning protein YciB (179 aa).

Transmembrane regions (helical) follow at residues 22-42, 50-70, 76-96, 121-141, and 149-169; these read IYAA…YSWV, MALI…FFHN, WKVT…QWVM, LAWA…AFWL, and FKVF…GVYI.

This sequence belongs to the YciB family.

The protein localises to the cell inner membrane. Its function is as follows. Plays a role in cell envelope biogenesis, maintenance of cell envelope integrity and membrane homeostasis. The chain is Inner membrane-spanning protein YciB from Salmonella arizonae (strain ATCC BAA-731 / CDC346-86 / RSK2980).